A 624-amino-acid polypeptide reads, in one-letter code: Phosphomethylpyrimidine synthase (624 aa).

The segment at 48-70 (SDTHTSQGREKNPPLTVYDTSGP) is disordered. Residues N229, M258, Y287, H323, 343 to 345 (SRG), 384 to 387 (DGLR), and E423 contribute to the substrate site. A Zn(2+)-binding site is contributed by H427. Residue Y450 coordinates substrate. Zn(2+) is bound at residue H491. 3 residues coordinate [4Fe-4S] cluster: C571, C574, and C579.

It belongs to the ThiC family. Homodimer. [4Fe-4S] cluster serves as cofactor.

It carries out the reaction 5-amino-1-(5-phospho-beta-D-ribosyl)imidazole + S-adenosyl-L-methionine = 4-amino-2-methyl-5-(phosphooxymethyl)pyrimidine + CO + 5'-deoxyadenosine + formate + L-methionine + 3 H(+). Its pathway is cofactor biosynthesis; thiamine diphosphate biosynthesis. Functionally, catalyzes the synthesis of the hydroxymethylpyrimidine phosphate (HMP-P) moiety of thiamine from aminoimidazole ribotide (AIR) in a radical S-adenosyl-L-methionine (SAM)-dependent reaction. The protein is Phosphomethylpyrimidine synthase of Nitrosococcus oceani (strain ATCC 19707 / BCRC 17464 / JCM 30415 / NCIMB 11848 / C-107).